Reading from the N-terminus, the 304-residue chain is 2-oxoacid:ferredoxin oxidoreductase 2, subunit beta (304 aa).

Residues Cys-12, Cys-15, and Cys-46 each contribute to the [4Fe-4S] cluster site. Residues Ile-44–Ser-47 and His-65 each bind thiamine diphosphate. Asp-90 provides a ligand contact to Mg(2+). Position 91 to 92 (Gly-91 to Asp-92) interacts with thiamine diphosphate. Mg(2+) is bound by residues Asn-118 and Val-120. Gly-122–Leu-123 provides a ligand contact to thiamine diphosphate. Cys-197 provides a ligand contact to [4Fe-4S] cluster.

In terms of assembly, heterodimer composed of an alpha and a beta subunit. The cofactor is [4Fe-4S] cluster. Thiamine diphosphate is required as a cofactor. It depends on Mg(2+) as a cofactor.

The catalysed reaction is a 2-oxocarboxylate + 2 oxidized [2Fe-2S]-[ferredoxin] + CoA = an acyl-CoA + 2 reduced [2Fe-2S]-[ferredoxin] + CO2 + H(+). Its function is as follows. Catalyzes the coenzyme A-dependent oxidative decarboxylation of different 2-oxoacids such as 2-oxoglutarate, pyruvate and 2-oxobutyrate to form their CoA derivatives. This Sulfurisphaera tokodaii (strain DSM 16993 / JCM 10545 / NBRC 100140 / 7) (Sulfolobus tokodaii) protein is 2-oxoacid:ferredoxin oxidoreductase 2, subunit beta.